The chain runs to 760 residues: Phosphoribosylformylglycinamidine synthase subunit PurL (760 aa).

The interval 1-25 (MNMSLPADRDTAKKPSAQKPSAHAQ) is disordered. H69 is a catalytic residue. ATP-binding residues include Y72 and K115. E117 provides a ligand contact to Mg(2+). Residues 118–121 (SHNH) and R140 contribute to the substrate site. Catalysis depends on H119, which acts as the Proton acceptor. D141 is a Mg(2+) binding site. A substrate-binding site is contributed by Q265. Mg(2+) is bound at residue D293. Residue 337–339 (ESQ) participates in substrate binding. Residues N519 and G556 each contribute to the ATP site. N557 contributes to the Mg(2+) binding site. Residue S559 coordinates substrate.

This sequence belongs to the FGAMS family. Monomer. Part of the FGAM synthase complex composed of 1 PurL, 1 PurQ and 2 PurS subunits.

The protein resides in the cytoplasm. The catalysed reaction is N(2)-formyl-N(1)-(5-phospho-beta-D-ribosyl)glycinamide + L-glutamine + ATP + H2O = 2-formamido-N(1)-(5-O-phospho-beta-D-ribosyl)acetamidine + L-glutamate + ADP + phosphate + H(+). Its pathway is purine metabolism; IMP biosynthesis via de novo pathway; 5-amino-1-(5-phospho-D-ribosyl)imidazole from N(2)-formyl-N(1)-(5-phospho-D-ribosyl)glycinamide: step 1/2. Functionally, part of the phosphoribosylformylglycinamidine synthase complex involved in the purines biosynthetic pathway. Catalyzes the ATP-dependent conversion of formylglycinamide ribonucleotide (FGAR) and glutamine to yield formylglycinamidine ribonucleotide (FGAM) and glutamate. The FGAM synthase complex is composed of three subunits. PurQ produces an ammonia molecule by converting glutamine to glutamate. PurL transfers the ammonia molecule to FGAR to form FGAM in an ATP-dependent manner. PurS interacts with PurQ and PurL and is thought to assist in the transfer of the ammonia molecule from PurQ to PurL. This chain is Phosphoribosylformylglycinamidine synthase subunit PurL, found in Tropheryma whipplei (strain TW08/27) (Whipple's bacillus).